The following is a 338-amino-acid chain: uncharacterized protein (338 aa).

The disordered stretch occupies residues 1-72 (MASPPILSRE…LNPVEDYDSK (72 aa)). Polar residues predominate over residues 24–38 (GGNSEVNIDPSASSS). Positions 49–58 (ADTKIDPHLL) are enriched in basic and acidic residues. Residues 59–68 (EEDDLNPVED) are compositionally biased toward acidic residues.

Its subcellular location is the cytoplasm. The protein localises to the nucleus. This is an uncharacterized protein from Schizosaccharomyces pombe (strain 972 / ATCC 24843) (Fission yeast).